Consider the following 475-residue polypeptide: Methyltransferase-like protein 25B (475 aa).

Residues 185–210 are a coiled coil; it reads NKRLVARAQRLDQELLQALDKMEKRH. The helical transmembrane segment at 406-426 threads the bilayer; the sequence is VVAFFSLALLLAPLVETLILL.

The protein belongs to the METTL25 family.

The protein localises to the membrane. This chain is Methyltransferase-like protein 25B, found in Rattus norvegicus (Rat).